A 490-amino-acid polypeptide reads, in one-letter code: Betaine aldehyde dehydrogenase (490 aa).

K(+)-binding residues include Thr26, Ile27, and Asp93. Position 150–152 (150–152) interacts with NAD(+); sequence GAW. The Charge relay system role is filled by Lys162. NAD(+) is bound at residue 176–179; sequence KPSE. A K(+)-binding site is contributed by Val180. Residue 230–233 coordinates NAD(+); the sequence is GVAS. Leu246 contacts K(+). Catalysis depends on Glu252, which acts as the Proton acceptor. NAD(+)-binding residues include Gly254, Cys286, and Glu387. Residue Cys286 is the Nucleophile of the active site. Cys286 carries the cysteine sulfenic acid (-SOH) modification. Residues Lys457 and Gly460 each coordinate K(+). The active-site Charge relay system is the Glu464.

The protein belongs to the aldehyde dehydrogenase family. Dimer of dimers. The cofactor is K(+).

It carries out the reaction betaine aldehyde + NAD(+) + H2O = glycine betaine + NADH + 2 H(+). The protein operates within amine and polyamine biosynthesis; betaine biosynthesis via choline pathway; betaine from betaine aldehyde: step 1/1. In terms of biological role, involved in the biosynthesis of the osmoprotectant glycine betaine. Catalyzes the irreversible oxidation of betaine aldehyde to the corresponding acid. The chain is Betaine aldehyde dehydrogenase from Escherichia coli O9:H4 (strain HS).